The chain runs to 253 residues: Indole-3-glycerol phosphate synthase (253 aa).

This sequence belongs to the TrpC family.

The catalysed reaction is 1-(2-carboxyphenylamino)-1-deoxy-D-ribulose 5-phosphate + H(+) = (1S,2R)-1-C-(indol-3-yl)glycerol 3-phosphate + CO2 + H2O. It functions in the pathway amino-acid biosynthesis; L-tryptophan biosynthesis; L-tryptophan from chorismate: step 4/5. This Petrotoga mobilis (strain DSM 10674 / SJ95) protein is Indole-3-glycerol phosphate synthase.